A 259-amino-acid polypeptide reads, in one-letter code: Imidazole glycerol phosphate synthase subunit HisF (259 aa).

Active-site residues include Asp-11 and Asp-130.

The protein belongs to the HisA/HisF family. In terms of assembly, heterodimer of HisH and HisF.

It localises to the cytoplasm. It catalyses the reaction 5-[(5-phospho-1-deoxy-D-ribulos-1-ylimino)methylamino]-1-(5-phospho-beta-D-ribosyl)imidazole-4-carboxamide + L-glutamine = D-erythro-1-(imidazol-4-yl)glycerol 3-phosphate + 5-amino-1-(5-phospho-beta-D-ribosyl)imidazole-4-carboxamide + L-glutamate + H(+). It participates in amino-acid biosynthesis; L-histidine biosynthesis; L-histidine from 5-phospho-alpha-D-ribose 1-diphosphate: step 5/9. IGPS catalyzes the conversion of PRFAR and glutamine to IGP, AICAR and glutamate. The HisF subunit catalyzes the cyclization activity that produces IGP and AICAR from PRFAR using the ammonia provided by the HisH subunit. This chain is Imidazole glycerol phosphate synthase subunit HisF, found in Solidesulfovibrio magneticus (strain ATCC 700980 / DSM 13731 / RS-1) (Desulfovibrio magneticus).